The following is a 136-amino-acid chain: 1,4-dihydroxy-2-naphthoyl-CoA hydrolase (136 aa).

Residue glutamate 63 is the Nucleophile or proton acceptor of the active site. Residues glycine 82, 89–92, and 106–111 contribute to the substrate site; these read HVRS and HLGSRH.

It belongs to the thioesterase PaaI family. In terms of assembly, homotetramer. Dimer of dimers.

The catalysed reaction is 1,4-dihydroxy-2-naphthoyl-CoA + H2O = 1,4-dihydroxy-2-naphthoate + CoA + H(+). It participates in quinol/quinone metabolism; 1,4-dihydroxy-2-naphthoate biosynthesis; 1,4-dihydroxy-2-naphthoate from chorismate: step 7/7. The protein operates within quinol/quinone metabolism; menaquinone biosynthesis. Its function is as follows. Catalyzes the hydrolysis of 1,4-dihydroxy-2-naphthoyl-CoA (DHNA-CoA) to 1,4-dihydroxy-2-naphthoate (DHNA). Also shows significant activity toward a wide range of acyl-CoA thioesters, and minimal activity toward benzoyl-holoEntB. The chain is 1,4-dihydroxy-2-naphthoyl-CoA hydrolase from Escherichia coli (strain K12).